Here is a 290-residue protein sequence, read N- to C-terminus: Protease HtpX (290 aa).

Helical transmembrane passes span 6-26 and 36-56; these read LFLV…NILF and ISGL…ISLL. Zn(2+) is bound at residue H143. The active site involves E144. H147 contacts Zn(2+). 2 consecutive transmembrane segments (helical) span residues 158-178 and 200-220; these read LIQG…AGVI and ITVF…VMWF. E225 contacts Zn(2+).

The protein belongs to the peptidase M48B family. The cofactor is Zn(2+).

The protein localises to the cell inner membrane. The protein is Protease HtpX of Aeromonas hydrophila subsp. hydrophila (strain ATCC 7966 / DSM 30187 / BCRC 13018 / CCUG 14551 / JCM 1027 / KCTC 2358 / NCIMB 9240 / NCTC 8049).